Here is a 361-residue protein sequence, read N- to C-terminus: tRNA(Ile)-lysidine synthase (361 aa).

ATP is bound at residue 32-37 (SGGPDS).

It belongs to the tRNA(Ile)-lysidine synthase family.

Its subcellular location is the cytoplasm. It catalyses the reaction cytidine(34) in tRNA(Ile2) + L-lysine + ATP = lysidine(34) in tRNA(Ile2) + AMP + diphosphate + H(+). Its function is as follows. Ligates lysine onto the cytidine present at position 34 of the AUA codon-specific tRNA(Ile) that contains the anticodon CAU, in an ATP-dependent manner. Cytidine is converted to lysidine, thus changing the amino acid specificity of the tRNA from methionine to isoleucine. The chain is tRNA(Ile)-lysidine synthase from Bradyrhizobium diazoefficiens (strain JCM 10833 / BCRC 13528 / IAM 13628 / NBRC 14792 / USDA 110).